Consider the following 109-residue polypeptide: Flagellar hook-basal body complex protein FliE (109 aa).

This sequence belongs to the FliE family.

It localises to the bacterial flagellum basal body. The chain is Flagellar hook-basal body complex protein FliE from Pseudomonas aeruginosa (strain LESB58).